Reading from the N-terminus, the 298-residue chain is Nitrogenase iron protein (298 aa).

Position 13 to 20 (13 to 20 (GKGGIGKS)) interacts with ATP. [4Fe-4S] cluster is bound at residue Cys101. ADP-ribosylarginine; by dinitrogenase reductase ADP-ribosyltransferase is present on Arg104. [4Fe-4S] cluster is bound at residue Cys135.

This sequence belongs to the NifH/BchL/ChlL family. As to quaternary structure, homodimer. Requires [4Fe-4S] cluster as cofactor. In terms of processing, the reversible ADP-ribosylation of Arg-104 inactivates the nitrogenase reductase and regulates nitrogenase activity.

The catalysed reaction is N2 + 8 reduced [2Fe-2S]-[ferredoxin] + 16 ATP + 16 H2O = H2 + 8 oxidized [2Fe-2S]-[ferredoxin] + 2 NH4(+) + 16 ADP + 16 phosphate + 6 H(+). Functionally, the key enzymatic reactions in nitrogen fixation are catalyzed by the nitrogenase complex, which has 2 components: the iron protein and the molybdenum-iron protein. This Cyanothece sp. (strain PCC 7425 / ATCC 29141) protein is Nitrogenase iron protein.